A 412-amino-acid chain; its full sequence is Intraflagellar transport protein che-13 (412 aa).

Disordered regions lie at residues 1-21 (MEEE…GSAI) and 162-193 (PPKE…NFLD). Residues 165–193 (EEDEDTAVDEQDEDDDNDDIVEEPMNFLD) show a composition bias toward acidic residues. A coiled-coil region spans residues 302–393 (QLASMMSKFR…VQIGVFEQSI (92 aa)).

It belongs to the IFT57 family. As to quaternary structure, component of the IFT complex B composed of at least che-2, che-13, dyf-1, dyf-3, dyf-6, dyf-11, dyf-13, ift-20, ift-74, ift-81, ifta-2, osm-1, osm-5 and osm-6.

The protein localises to the cytoplasm. It localises to the cytoskeleton. The protein resides in the cilium axoneme. Its function is as follows. Component of the intraflagellar transport (IFT) complex B required for transport of proteins in the motile cilium. May be required for ciliary entrance and transport of specific ciliary cargo proteins such as che-3 which are related to motility. Required for the formation of chemosensory cilia that detect chemosensory cues. This Caenorhabditis elegans protein is Intraflagellar transport protein che-13.